A 252-amino-acid polypeptide reads, in one-letter code: Mitochondrial intermembrane space import and assembly protein 40 (252 aa).

The transit peptide at 1–31 directs the protein to the mitochondrion; that stretch reads MYRTISRSSSGLIRQSTARLTRQLSTTRTTP. Residues 32-37 are Mitochondrial matrix-facing; the sequence is SQYNSK. A helical; Signal-anchor for type II membrane protein transmembrane segment spans residues 38–54; it reads LLLGVLGTGALAFGYFS. The Mitochondrial intermembrane portion of the chain corresponds to 55–252; the sequence is QQSSLIQNAS…DKVKPNTKSD (198 aa). Residues 90-123 show a composition bias toward basic and acidic residues; that stretch reads RQEKVIKENEQKTKKAEDAKTSSESKANVADKKS. Positions 90 to 143 are disordered; sequence RQEKVIKENEQKTKKAEDAKTSSESKANVADKKSNSQPEGEPEGEGKQEAAFNP. 3 disulfide bridges follow: Cys152-Cys154, Cys163-Cys196, and Cys173-Cys186. The region spanning 160 to 204 is the CHCH domain; that stretch reads HGPCGEEFKEAFSCFVFSETEPKGIDCIKKFENMRSCFKRYPEHY. 2 short sequence motifs (cx9C motif) span residues 163–173 and 186–196; these read CGEEFKEAFSC and CIKKFENMRSC. A disordered region spans residues 230–252; sequence EPAIEQIEQGIKEDKVKPNTKSD. Positions 239–252 are enriched in basic and acidic residues; it reads GIKEDKVKPNTKSD.

As to quaternary structure, monomer. Cu(2+) serves as cofactor. Zn(2+) is required as a cofactor.

It is found in the mitochondrion inner membrane. In terms of biological role, required for the import and folding of small cysteine-containing proteins (small Tim) in the mitochondrial intermembrane space (IMS). Forms a redox cycle with ERV1 that involves a disulfide relay system. Precursor proteins to be imported into the IMS are translocated in their reduced form into the mitochondria. The oxidized form of MIA40 forms a transient intermolecular disulfide bridge with the reduced precursor protein, resulting in oxidation of the precursor protein that now contains an intramolecular disulfide bond and is able to undergo folding in the IMS. The protein is Mitochondrial intermembrane space import and assembly protein 40 (MIA40) of Candida albicans (strain SC5314 / ATCC MYA-2876) (Yeast).